Here is a 348-residue protein sequence, read N- to C-terminus: WD repeat-containing protein JIP5 (348 aa).

WD repeat units lie at residues 5-44 (KLKNQPFDVAFHPKEPVVFSSLLTGQVCAWSYDDATGETS), 51-90 (PSKRTARALSIEENGDEIWMGGKSGSLFQLSTRDGSMTRE), 94-132 (AHECPINRVYCVNRNLVATGDDDGVIKLWDPRQADSIRT), 135-174 (QHFDYISDFTYFDDKRQLVATSGDGHLSVIDIRSNKSTPL), 179-218 (DQEDELLSIVPIKGGQKAIVGSGLGILSVWNRQMGWADSV), 223-261 (GHPASIDAIVALTPDIIATGSEDGMIRVIQVLPHKFLGV), and 264-304 (THEE…EDSD). Residues 299–318 (LFEDSDEDDEMEEDEPDSDE) show a composition bias toward acidic residues. Residues 299-348 (LFEDSDEDDEMEEDEPDSDEEKSKKKKKDNGMKDMSRGQAENDGSFFADL) are disordered.

It belongs to the WD repeat WDR55 family.

It localises to the nucleus. The protein localises to the nucleolus. The sequence is that of WD repeat-containing protein JIP5 (JIP5) from Cryptococcus neoformans var. neoformans serotype D (strain JEC21 / ATCC MYA-565) (Filobasidiella neoformans).